The primary structure comprises 397 residues: Decapping and exoribonuclease protein (397 aa).

The span at 1–20 (MESRGTKREAGKIEVAEPRN) shows a compositional bias: basic and acidic residues. Residues 1-37 (MESRGTKREAGKIEVAEPRNKLPRPAPSLPTDPALYS) are disordered. R58 contacts substrate. A disordered region spans residues 67 to 88 (LRYYSPPPTNGQSPNFDLRDGY). Substrate is bound by residues E101 and 131 to 133 (WRG). E192 serves as a coordination point for Mg(2+). The substrate site is built by C217 and E234. Mg(2+) contacts are provided by E234, D236, E253, and L254. Substrate is bound by residues K255 and Q280. T392 carries the post-translational modification Phosphothreonine. S394 is subject to Phosphoserine.

The protein belongs to the DXO/Dom3Z family. It depends on Mg(2+) as a cofactor.

The protein localises to the nucleus. The enzyme catalyses a 5'-end triphospho-ribonucleoside in mRNA + H2O = a 5'-end phospho-ribonucleoside in mRNA + diphosphate + H(+). It catalyses the reaction a 5'-end NAD(+)-phospho-ribonucleoside in mRNA + H2O = a 5'-end phospho-ribonucleoside in mRNA + NAD(+) + H(+). The catalysed reaction is a 5'-end NAD(+)-phospho-ribonucleoside in snoRNA + H2O = a 5'-end phospho-ribonucleoside in snoRNA + NAD(+) + H(+). It carries out the reaction a 5'-end (N(7)-methyl 5'-triphosphoguanosine)-ribonucleoside-ribonucleotide in mRNA + H2O = a (N(7)-methyl 5'-triphosphoguanosine)-nucleoside + a 5'-end phospho-ribonucleoside in mRNA + H(+). The enzyme catalyses a 5'-end FAD-phospho-ribonucleoside in mRNA + H2O = a 5'-end phospho-ribonucleoside in mRNA + FAD + H(+). It catalyses the reaction a 5'-end CoA-ribonucleoside in mRNA + H2O = 3'-dephospho-CoA + a 5'-end phospho-ribonucleoside in mRNA + H(+). Its function is as follows. Decapping enzyme for NAD-capped RNAs: specifically hydrolyzes the nicotinamide adenine dinucleotide (NAD) cap from a subset of RNAs by removing the entire NAD moiety from the 5'-end of an NAD-capped RNA. The NAD-cap is present at the 5'-end of some RNAs and snoRNAs. In contrast to the canonical 5'-end N7 methylguanosine (m7G) cap, the NAD cap promotes mRNA decay. Preferentially acts on NAD-capped transcripts in response to environmental stress. Also acts as a non-canonical decapping enzyme that removes the entire cap structure of m7G capped or incompletely capped RNAs and mediates their subsequent degradation. Specifically degrades pre-mRNAs with a defective 5'-end m7G cap and is part of a pre-mRNA capping quality control. Has decapping activity toward incomplete 5'-end m7G cap mRNAs such as unmethylated 5'-end-capped RNA (cap0), while it has no activity toward 2'-O-ribose methylated m7G cap (cap1). In contrast to canonical decapping enzymes DCP2 and NUDT16, which cleave the cap within the triphosphate linkage, the decapping activity releases the entire cap structure GpppN and a 5'-end monophosphate RNA. Also has 5'-3' exoribonuclease activities: The 5'-end monophosphate RNA is then degraded by the 5'-3' exoribonuclease activity, enabling this enzyme to decap and degrade incompletely capped mRNAs. Also possesses RNA 5'-pyrophosphohydrolase activity by hydrolyzing the 5'-end triphosphate to release pyrophosphates. Exhibits decapping activity towards FAD-capped RNAs. Exhibits decapping activity towards dpCoA-capped RNAs in vitro. The chain is Decapping and exoribonuclease protein from Bos taurus (Bovine).